A 347-amino-acid chain; its full sequence is GMP reductase (347 aa).

NADP(+) is bound at residue Ala108–Ala131. K(+) is bound by residues Gly181 and Gly183. Cys186 acts as the Thioimidate intermediate in catalysis. Ile216–Val239 lines the NADP(+) pocket.

This sequence belongs to the IMPDH/GMPR family. GuaC type 1 subfamily. Homotetramer.

It catalyses the reaction IMP + NH4(+) + NADP(+) = GMP + NADPH + 2 H(+). In terms of biological role, catalyzes the irreversible NADPH-dependent deamination of GMP to IMP. It functions in the conversion of nucleobase, nucleoside and nucleotide derivatives of G to A nucleotides, and in maintaining the intracellular balance of A and G nucleotides. This is GMP reductase from Vibrio campbellii (strain ATCC BAA-1116).